Consider the following 113-residue polypeptide: Mini zinc finger protein 2 (113 aa).

The ZF-HD dimerization-type; degenerate zinc-finger motif lies at 24–83; that stretch reads YGECRRNHAASTGGHAVDGCREFIAAEDGGGGNSTSAVGVAAAALKCAACGCHRSFHRRV. Residues 93–113 are disordered; sequence DCASGDTSSSSPSSSSSLSSE. A compositionally biased stretch (low complexity) spans 100 to 113; the sequence is SSSSPSSSSSLSSE.

As to quaternary structure, homo- and heterodimers.

Its subcellular location is the cytoplasm. Functionally, inhibits zinc finger homeodomain (ZHD) transcription factors, by interacting with them to prevent both their nuclear localization and their DNA-binding properties. This chain is Mini zinc finger protein 2 (MIF3), found in Oryza sativa subsp. japonica (Rice).